Reading from the N-terminus, the 129-residue chain is MSILKEFREFAVKGNVVDMAVGVIIGGAFGKIVSSLVSDVVMPPIGWLIGGVDFKDLAIEIAPAKEGAEAVMLKYGAFIQNVFLLGVIAIAADGMGTLINKIKKPAEAAPAEPTAEEKLLTEIRDLLKK.

2 consecutive transmembrane segments (helical) span residues 10 to 30 (FAVK…GAFG) and 70 to 90 (AVML…VIAI).

The protein belongs to the MscL family. Homopentamer.

The protein resides in the cell inner membrane. In terms of biological role, channel that opens in response to stretch forces in the membrane lipid bilayer. May participate in the regulation of osmotic pressure changes within the cell. This chain is Large-conductance mechanosensitive channel, found in Actinobacillus pleuropneumoniae serotype 3 (strain JL03).